The chain runs to 116 residues: Cocaine- and amphetamine-regulated transcript protein (116 aa).

A signal peptide spans 1–27; it reads MESPRLRLLPLLGAALLLLLPLLGALA. A Phosphotyrosine modification is found at Y41. S48 is modified (phosphoserine). Disulfide bonds link C82–C100, C88–C108, and C102–C115.

The protein belongs to the CART family.

It localises to the secreted. In terms of biological role, satiety factor closely associated with the actions of leptin and neuropeptide y; this anorectic peptide inhibits both normal and starvation-induced feeding and completely blocks the feeding response induced by neuropeptide Y and regulated by leptin in the hypothalamus. The protein is Cocaine- and amphetamine-regulated transcript protein (CARTPT) of Bos taurus (Bovine).